The following is a 234-amino-acid chain: Small ribosomal subunit protein uS3 (234 aa).

One can recognise a KH type-2 domain in the interval isoleucine 39–lysine 107.

It belongs to the universal ribosomal protein uS3 family. In terms of assembly, part of the 30S ribosomal subunit. Forms a tight complex with proteins S10 and S14.

Functionally, binds the lower part of the 30S subunit head. Binds mRNA in the 70S ribosome, positioning it for translation. The sequence is that of Small ribosomal subunit protein uS3 from Helicobacter pylori (strain J99 / ATCC 700824) (Campylobacter pylori J99).